A 115-amino-acid polypeptide reads, in one-letter code: Large ribosomal subunit protein bL19 (115 aa).

This sequence belongs to the bacterial ribosomal protein bL19 family.

This protein is located at the 30S-50S ribosomal subunit interface and may play a role in the structure and function of the aminoacyl-tRNA binding site. The protein is Large ribosomal subunit protein bL19 of Aeromonas hydrophila subsp. hydrophila (strain ATCC 7966 / DSM 30187 / BCRC 13018 / CCUG 14551 / JCM 1027 / KCTC 2358 / NCIMB 9240 / NCTC 8049).